Consider the following 612-residue polypeptide: MSHPSWLPPKSTGEPLGHVPARMETTHSFGNPSISVSTQQPPKKFAPVVAPKPKYNPYKQPGGEGDFLPPPPPPLDDSSALPSISGNFPPPPPLDEEAFKVQGNPGGKTLEERRSSLDAEIDSLTSILADLECSSPYKPRPPQSSTGSTASPPVSTPVTGHKRMVIPNQPPLTATKKSTLKPQPAPQAGPIPVAPIGTLKPQPQPVPASYTTASTSSRPTFNVQVKSAQPSPHYMAAPSSGQIYGSGPQGYNTQPVPVSGQCPPPSTRGGMDYAYIPPPGLQPEPGYGYAPNQGRYYEGYYAAGPGYGGRNDSDPTYGQQGHPNTWKREPGYTPPGAGNQNPPGMYPVTGPKKTYITDPVSAPCAPPLQPKGGHSGQLGPSSVAPSFRPEDELEHLTKKMLYDMENPPADEYFGRCARCGENVVGEGTGCTAMDQVFHVDCFTCIICNNKLRGQPFYAVEKKAYCEPCYINTLEQCNVCSKPIMERILRATGKAYHPHCFTCVMCHRSLDGIPFTVDAGGLIHCIEDFHKKFAPRCSVCKEPIMPAPGQEETVRIVALDRDFHVHCYRCEDCGGLLSEGDNQGCYPLDGHILCKTCNSARIRVLTAKASTDL.

2 disordered regions span residues 1–118 (MSHP…SSLD) and 132–219 (ECSS…SSRP). Residues 26 to 40 (THSFGNPSISVSTQQ) show a composition bias toward polar residues. The segment covering 41-53 (PPKKFAPVVAPKP) has biased composition (low complexity). K108 bears the N6-acetyllysine mark. Phosphoserine is present on residues S116 and S151. Composition is skewed to polar residues over residues 143–158 (QSSTGSTASPPVSTPV) and 171–181 (PLTATKKSTLK). Pro residues predominate over residues 183–193 (QPAPQAGPIPV). A compositionally biased stretch (polar residues) spans 209 to 219 (SYTTASTSSRP). Y244 and Y301 each carry phosphotyrosine. A disordered region spans residues 307 to 387 (YGGRNDSDPT…LGPSSVAPSF (81 aa)). Residues 314–323 (DPTYGQQGHP) are compositionally biased toward polar residues. A Glycyl lysine isopeptide (Lys-Gly) (interchain with G-Cter in SUMO1) cross-link involves residue K327. Phosphothreonine is present on T333. S375 bears the Phosphoserine mark. LIM zinc-binding domains follow at residues 414 to 473 (GRCA…INTL), 474 to 534 (EQCN…KFAP), and 535 to 603 (RCSV…RIRV).

This sequence belongs to the zyxin/ajuba family. Interacts with VASP, with PDZ domains of SCRIB and with ACTN1/alpha-actinin. As to expression, expressed in a wide variety of tissues but no or very low expression in brain and peripheral leukocytes.

It is found in the nucleus. Its subcellular location is the cytoplasm. The protein localises to the cell junction. The protein resides in the cell membrane. May play a structural role at sites of cell adhesion in maintaining cell shape and motility. In addition to these structural functions, it may also be implicated in signaling events and activation of gene transcription. May be involved in signal transduction from cell adhesion sites to the nucleus allowing successful integration of signals arising from soluble factors and cell-cell adhesion sites. Also suggested to serve as a scaffold protein upon which distinct protein complexes are assembled in the cytoplasm and in the nucleus. This chain is Lipoma-preferred partner (LPP), found in Homo sapiens (Human).